Consider the following 459-residue polypeptide: O-phospho-L-seryl-tRNA:Cys-tRNA synthase 1 (459 aa).

Residues 152 to 153, Asn-257, and 280 to 282 each bind pyridoxal 5'-phosphate; these read AR and SGH. N6-(pyridoxal phosphate)lysine is present on Lys-283.

This sequence belongs to the SepCysS family. As to quaternary structure, homodimer. Interacts with SepRS. Requires pyridoxal 5'-phosphate as cofactor.

The catalysed reaction is O-phospho-L-seryl-tRNA(Cys) + hydrogen sulfide + H(+) = L-cysteinyl-tRNA(Cys) + phosphate. Its function is as follows. Converts O-phospho-L-seryl-tRNA(Cys) (Sep-tRNA(Cys)) to L-cysteinyl-tRNA(Cys) (Cys-tRNA(Cys)). This chain is O-phospho-L-seryl-tRNA:Cys-tRNA synthase 1, found in Methanococcoides burtonii (strain DSM 6242 / NBRC 107633 / OCM 468 / ACE-M).